Reading from the N-terminus, the 340-residue chain is Serpentine receptor class alpha-18 (340 aa).

The next 6 membrane-spanning stretches (helical) occupy residues 29-49, 109-129, 149-169, 198-218, 249-269, and 285-305; these read FNFIFIITVVLISYCFTWLAI, VFELYLYYPTGYFSTYSVFSL, FIATSLLVLQLLLTMFSFYIV, VRTGVMVSCIIVTMFVYYVCV, ISIVLQFSCIMISSFGSNLLI, and IVSFLPGVTYANLCLPLVIYF.

It belongs to the nematode receptor-like protein sra family.

The protein resides in the membrane. The chain is Serpentine receptor class alpha-18 (sra-18) from Caenorhabditis elegans.